The sequence spans 798 residues: Gelsolin (798 aa).

The signal sequence occupies residues 1–28; the sequence is MDASGAATMAVLSSLLVFLALSSSLCSA. Residues 57-181 form an actin-severing region; sequence RVMHPSFANA…YEQGGVGTGF (125 aa). One copy of the Gelsolin-like 1 repeat lies at 78-131; the sequence is ENFEPVIYPKTNYGKFYTGDSFIVLNTIENKKDKKLSWDVHFWLGLETSTDEAG. A Phosphotyrosine; by SRC modification is found at tyrosine 90. The tract at residues 128–131 is actin-actin interfilament contact point; sequence DEAG. Residues 167–174 and 193–201 each bind a 1,2-diacyl-sn-glycero-3-phospho-(1D-myo-inositol-4,5-bisphosphate); these read KNGIRYEQ and RLFQVKGKR. Gelsolin-like repeat units lie at residues 203–243, 322–365, 474–524, and 583–625; these read VRVR…VEKL, LKVD…KEKT, IVVS…AARK, and VHAS…FEKQ. The segment at 451 to 792 is actin-binding, Ca-sensitive; sequence MPDHGQNVIE…SYEDMKQLVI (342 aa). Aspartate 599 is a Ca(2+) binding site. The residue at position 612 (tyrosine 612) is a Phosphotyrosine; by SRC. Position 623 (glutamate 623) interacts with Ca(2+). Tyrosine 662 is modified (phosphotyrosine; by SRC). The Gelsolin-like 6 repeat unit spans residues 689–730; that stretch reads LKVEEVAQYEQEDLDSDDIMLLDAGDEIYLWVGYGVSEEENG. The Ca(2+) site is built by aspartate 705, aspartate 706, and glutamate 728.

The protein belongs to the villin/gelsolin family. In terms of assembly, binds to actin and to fibronectin. In terms of tissue distribution, isoform 1 and isoform 2 are ubiquitously expressed in early embryo. Isoform 1 is expressed in the fat body, and is abundant in hemolymph. Isoform 2 is expressed in parts of the gut.

Its subcellular location is the cytoplasm. The protein localises to the cytoskeleton. It localises to the secreted. Calcium-regulated, actin-modulating protein that binds to the plus (or barbed) ends of actin monomers or filaments, preventing monomer exchange (end-blocking or capping). It can promote the assembly of monomers into filaments (nucleation) as well as sever filaments already formed. This chain is Gelsolin (Gel), found in Drosophila melanogaster (Fruit fly).